The primary structure comprises 512 residues: Cytochrome P450 4d1 (512 aa).

Residues E316 and C456 each contribute to the heme site.

Belongs to the cytochrome P450 family. Heme serves as cofactor.

Its subcellular location is the endoplasmic reticulum membrane. The protein localises to the microsome membrane. Its function is as follows. Involved in the metabolism of insect hormones and in the breakdown of synthetic insecticides. The chain is Cytochrome P450 4d1 (Cyp4d1) from Drosophila simulans (Fruit fly).